A 185-amino-acid chain; its full sequence is RING-H2 finger protein ATL8 (185 aa).

Residues 28–48 (LVLILAVLLCALTCIIGLIAV) traverse the membrane as a helical segment. The RING-type; atypical zinc-finger motif lies at 104 to 146 (CAICLTEFAAGDELRVLPQCGHGFHVSCIDTWLGSHSSCPSCR). Positions 161 to 185 (PGSSSSGPEPDTRIKQREDGPDNLP) are disordered. Residues 170–185 (PDTRIKQREDGPDNLP) show a composition bias toward basic and acidic residues.

The protein belongs to the RING-type zinc finger family. ATL subfamily.

The protein resides in the membrane. It carries out the reaction S-ubiquitinyl-[E2 ubiquitin-conjugating enzyme]-L-cysteine + [acceptor protein]-L-lysine = [E2 ubiquitin-conjugating enzyme]-L-cysteine + N(6)-ubiquitinyl-[acceptor protein]-L-lysine.. It participates in protein modification; protein ubiquitination. In Arabidopsis thaliana (Mouse-ear cress), this protein is RING-H2 finger protein ATL8 (ATL8).